The sequence spans 103 residues: Small ribosomal subunit protein uS10 (103 aa).

This sequence belongs to the universal ribosomal protein uS10 family. As to quaternary structure, part of the 30S ribosomal subunit.

In terms of biological role, involved in the binding of tRNA to the ribosomes. In Xanthomonas axonopodis pv. citri (strain 306), this protein is Small ribosomal subunit protein uS10.